The following is a 311-amino-acid chain: MVVWIRGDRLHAETLQWARRHVEELERFGVTPKLAVLLLNDDPVELETQRRYVSLKAKDVRSIGGEVEIYELYKEPPERREAAALRLIERLNNADDVTGVLIQKPLPPYIDEGRLFERLSPIKDVDGLTPENKKRLVAGFDLDRDILPCTPAGILELFRQYQVEVRGRDVVVVGKGTLVGFPLSIMLMQMDATVTTLHALSKDRAYYTRKADIVISAVGRPPELYGDNPWRLTGDMIKEGAVVVGVGGKVDPATKRWYFDVDENSVAEKASYLTPNIGGVGLATRARLVKNLIITTYMVLTRVTSPRLLSL.

Residue 174-176 participates in NADP(+) binding; the sequence is GKG.

The protein belongs to the tetrahydrofolate dehydrogenase/cyclohydrolase family. As to quaternary structure, homodimer.

The catalysed reaction is (6R)-5,10-methylene-5,6,7,8-tetrahydrofolate + NADP(+) = (6R)-5,10-methenyltetrahydrofolate + NADPH. It carries out the reaction (6R)-5,10-methenyltetrahydrofolate + H2O = (6R)-10-formyltetrahydrofolate + H(+). It functions in the pathway one-carbon metabolism; tetrahydrofolate interconversion. Its function is as follows. Catalyzes the oxidation of 5,10-methylenetetrahydrofolate to 5,10-methenyltetrahydrofolate and then the hydrolysis of 5,10-methenyltetrahydrofolate to 10-formyltetrahydrofolate. This Pyrobaculum neutrophilum (strain DSM 2338 / JCM 9278 / NBRC 100436 / V24Sta) (Thermoproteus neutrophilus) protein is Bifunctional protein FolD.